A 653-amino-acid polypeptide reads, in one-letter code: Acetyl-coenzyme A synthetase 1 (653 aa).

Residues 191–194 (RGGR), T311, and N335 contribute to the CoA site. Residues 387 to 389 (GEP), 411 to 416 (DTWWQT), D500, and R515 contribute to the ATP site. S523 serves as a coordination point for CoA. ATP is bound at residue R526. Positions 537, 539, and 542 each coordinate Mg(2+). R584 is a CoA binding site. K609 is modified (N6-acetyllysine).

The protein belongs to the ATP-dependent AMP-binding enzyme family. Mg(2+) serves as cofactor. In terms of processing, acetylated. Deacetylation by the SIR2-homolog deacetylase activates the enzyme.

It catalyses the reaction acetate + ATP + CoA = acetyl-CoA + AMP + diphosphate. In terms of biological role, catalyzes the conversion of acetate into acetyl-CoA (AcCoA), an essential intermediate at the junction of anabolic and catabolic pathways. AcsA undergoes a two-step reaction. In the first half reaction, AcsA combines acetate with ATP to form acetyl-adenylate (AcAMP) intermediate. In the second half reaction, it can then transfer the acetyl group from AcAMP to the sulfhydryl group of CoA, forming the product AcCoA. The sequence is that of Acetyl-coenzyme A synthetase 1 from Pseudomonas putida (strain ATCC 47054 / DSM 6125 / CFBP 8728 / NCIMB 11950 / KT2440).